The primary structure comprises 352 residues: Geranylgeranyl transferase type-1 subunit beta (352 aa).

PFTB repeat units follow at residues 135 to 180 (VNKK…FILD), 187 to 228 (KESA…SLLG), 236 to 276 (FKEQ…MMID), and 283 to 325 (FASI…SFGN). Residues 213–215 (HGG) and 255–258 (RTNK) contribute to the geranylgeranyl diphosphate site. Zn(2+) is bound by residues aspartate 261 and cysteine 263. A geranylgeranyl diphosphate-binding site is contributed by 264–267 (YAFW). A Zn(2+)-binding site is contributed by histidine 313.

The protein belongs to the protein prenyltransferase subunit beta family. Heterodimer of an alpha and a beta subunit. Zn(2+) serves as cofactor. Requires Mg(2+) as cofactor.

The catalysed reaction is geranylgeranyl diphosphate + L-cysteinyl-[protein] = S-geranylgeranyl-L-cysteinyl-[protein] + diphosphate. In terms of biological role, catalyzes the transfer of a geranyl-geranyl moiety from geranyl-geranyl pyrophosphate to a cysteine at the fourth position from the C-terminus of proteins having the C-terminal sequence Cys-aliphatic-aliphatic-X. The sequence is that of Geranylgeranyl transferase type-1 subunit beta (pggt1b) from Dictyostelium discoideum (Social amoeba).